The following is a 374-amino-acid chain: F-box/kelch-repeat protein At2g24250 (374 aa).

Positions 14-63 (PDWSQLPEELLHIISTHLEDHYFDAVHARSVCRSWRSTFPFPSSLLRQSY) constitute an F-box domain. 2 Kelch repeats span residues 100-150 (SEYF…PLGH) and 249-301 (NFLV…LGNF).

This Arabidopsis thaliana (Mouse-ear cress) protein is F-box/kelch-repeat protein At2g24250.